The primary structure comprises 174 residues: I-Kappa-B like protein C1 (174 aa).

ANK repeat units lie at residues 56-88 (RGRQ…DINA) and 93-123 (TGNS…NLGA).

This sequence belongs to the polydnaviridae I-Kappa-B-like protein family.

Suppresses the host immune response through NF-kappa-B inactivation. Possesses ankyrin repeat domains required for NF-kappa-B binding but lacks the regulatory regions required for dissociation from NF-kappa-B and degradation. Therefore, prevents host NF-kappa-B release and subsequent activation. This is I-Kappa-B like protein C1 (C1) from Microplitis demolitor bracovirus (isolate Webb) (MdBV).